We begin with the raw amino-acid sequence, 343 residues long: uncharacterized protein (343 aa).

This is an uncharacterized protein from Tortricidae (ClGV).